The primary structure comprises 262 residues: Tethering factor for nuclear proteasome cut8 (262 aa).

Belongs to the cut8/STS1 family. In terms of assembly, binds the proteasome. The N-terminal part (residues 1 to 72) is polyubiquitinated by rhp6, which is required for the interaction with the proteasome.

The protein localises to the nucleus envelope. Its function is as follows. Together with nucleoporin alm1, tethers the proteasome to the nuclear envelope. Involved in ubiquitin-mediated protein degradation and facilitates the degradation of nuclear proteins like mitotic cyclin and cut2. Required for normal progression of anaphase. The sequence is that of Tethering factor for nuclear proteasome cut8 from Schizosaccharomyces pombe (strain 972 / ATCC 24843) (Fission yeast).